A 511-amino-acid chain; its full sequence is Probable endopeptidase p60 (511 aa).

An N-terminal signal peptide occupies residues 1–27 (MNMKKATIVSAAGIAVTAFAAPSVVSA). Residues 28 to 71 (NTVVVASGDTLWGIASKTGTTVDQLKQLNKLDSDRIVPGQKLTI) enclose the LysM 1 domain. The 65-residue stretch at 78-142 (KVEKSVSATW…VNGKYLSDAK (65 aa)) folds into the SH3b domain. One can recognise a LysM 2 domain in the interval 175–218 (STYKVKSGDTIWALSVKYGVPVQKLIEWNNLSSSSIYVGQTIAV). Low complexity-rich tracts occupy residues 229-257 (TVKQ…QAKP) and 264-282 (KPAV…AKPA). A disordered region spans residues 229–291 (TVKQAAPAKV…AVEQKASTPA (63 aa)). Residues 297 to 341 (ATYKVQNGDSLGKIASLFKVSVADLTNWNNLNATITIYAGQELSV) enclose the LysM 3 domain. Low complexity-rich tracts occupy residues 347–362 (KPKP…SKPA) and 372–390 (TNTT…NTSQ). The tract at residues 347–390 (KPKPAAPAKPAVSKPATSTPAKVTPTNTTNNSTPTTNVNNNTSQ) is disordered. The 119-residue stretch at 393-511 (SASFSALYAE…GQYLVGFGRV (119 aa)) folds into the NlpC/P60 domain. The active-site Nucleophile is Cys423. The active-site Proton acceptor is the His473. The active site involves Asp485.

The protein belongs to the peptidase C40 family.

Functionally, this major extracellular protein may be involved in the invasion of non-professional phagocytic cells by Listeria. The polypeptide is Probable endopeptidase p60 (iap) (Listeria grayi (Listeria murrayi)).